The following is a 303-amino-acid chain: Cytochrome c oxidase subunit 2 (303 aa).

Residues 1–25 (MRHSTTLTGCATGAAGLLAATAAAA) form the signal peptide. A run of 2 helical transmembrane segments spans residues 60–80 (FILV…LYAV) and 104–124 (WTIV…PVLF). Cu cation contacts are provided by His-217, Cys-252, Cys-256, and His-260.

It belongs to the cytochrome c oxidase subunit 2 family. It depends on Cu cation as a cofactor.

It is found in the cell membrane. It carries out the reaction 4 Fe(II)-[cytochrome c] + O2 + 8 H(+)(in) = 4 Fe(III)-[cytochrome c] + 2 H2O + 4 H(+)(out). Subunits I and II form the functional core of the enzyme complex. Electrons originating in cytochrome c are transferred via heme a and Cu(A) to the binuclear center formed by heme a3 and Cu(B). In Cereibacter sphaeroides (Rhodobacter sphaeroides), this protein is Cytochrome c oxidase subunit 2 (ctaC).